The following is a 486-amino-acid chain: LON peptidase N-terminal domain and RING finger protein C14F5.10c (486 aa).

The segment at 169 to 207 adopts an RING-type zinc-finger fold; it reads CQICFGMLYDPVVSPCGHTFCGPCLMQALTQSPQCPTCR. A Lon N-terminal domain is found at 250–472; that stretch reads ESWLPLFISM…LVLIWLTQLQ (223 aa).

The protein is LON peptidase N-terminal domain and RING finger protein C14F5.10c of Schizosaccharomyces pombe (strain 972 / ATCC 24843) (Fission yeast).